We begin with the raw amino-acid sequence, 239 residues long: Uridylate kinase (239 aa).

10-13 (KLSG) serves as a coordination point for ATP. Residue Gly53 coordinates UMP. 2 residues coordinate ATP: Gly54 and Arg58. UMP-binding positions include Asp73 and 135–142 (TGRPYFTT). The ATP site is built by Asn163, Tyr169, and Asp172.

The protein belongs to the UMP kinase family. Homohexamer.

The protein localises to the cytoplasm. It catalyses the reaction UMP + ATP = UDP + ADP. The protein operates within pyrimidine metabolism; CTP biosynthesis via de novo pathway; UDP from UMP (UMPK route): step 1/1. With respect to regulation, inhibited by UTP. Functionally, catalyzes the reversible phosphorylation of UMP to UDP. The sequence is that of Uridylate kinase from Mycoplasmopsis synoviae (strain 53) (Mycoplasma synoviae).